The sequence spans 256 residues: Metallo-beta-lactamase type 2 (256 aa).

The first 29 residues, 1-29 (MKNTLLKLGVCVSLLGITPFVSTISSVQA), serve as a signal peptide directing secretion. Zn(2+)-binding residues include H115, H117, D119, H178, and C197. K200 and N209 together coordinate substrate. H239 contacts Zn(2+).

It belongs to the metallo-beta-lactamase superfamily. Class-B beta-lactamase family. As to quaternary structure, monomer. Requires Zn(2+) as cofactor.

Its subcellular location is the periplasm. It carries out the reaction a beta-lactam + H2O = a substituted beta-amino acid. Inhibited by chelating agents such as EDTA. In terms of biological role, confers resistance to the different beta-lactams antibiotics (penicillin, cephalosporin and carbapenem) via the hydrolysis of the beta-lactam ring. Benzylpenicillin is a better substrate than cephalosporin C and ampicillin. This chain is Metallo-beta-lactamase type 2, found in Bacillus cereus.